We begin with the raw amino-acid sequence, 482 residues long: C3a anaphylatoxin chemotactic receptor (482 aa).

Residues 1 to 23 are Extracellular-facing; it reads MASFSAETNSTDLLSQPWNEPPV. N-linked (GlcNAc...) asparagine glycosylation is present at Asn-9. The helical transmembrane segment at 24-46 threads the bilayer; the sequence is ILSMVILSLTFLLGLPGNGLVLW. The Cytoplasmic portion of the chain corresponds to 47–57; it reads VAGLKMQRTVN. Residues 58–80 form a helical membrane-spanning segment; sequence TIWFLHLTLADLLCCLSLPFSLA. Residues 81–96 are Extracellular-facing; it reads HLALQGQWPYGRFLCK. A disulfide bond links Cys-95 and Cys-172. Residues 97–118 traverse the membrane as a helical segment; that stretch reads LIPSIIVLNMFASVFLLTAISL. Over 119–139 the chain is Cytoplasmic; it reads DRCLVVFKPIWCQNHRNVGMA. Residues 140 to 160 form a helical membrane-spanning segment; it reads CSICGCIWVVAFVMCIPVFVY. Residues 161–340 lie on the Extracellular side of the membrane; that stretch reads REIFTTDNHN…TPLVAITITR (180 aa). 2 positions are modified to sulfotyrosine: Tyr-174 and Tyr-184. Asn-194 is a glycosylation site (N-linked (GlcNAc...) asparagine). An O-linked (GalNAc...) serine glycan is attached at Ser-266. Sulfotyrosine is present on Tyr-318. The helical transmembrane segment at 341 to 360 threads the bilayer; sequence LVVGFLLPSVIMIACYSFIV. At 361-377 the chain is on the cytoplasmic side; the sequence is FRMQRGRFAKSQSKTFR. A helical membrane pass occupies residues 378-400; the sequence is VAVVVVAVFLVCWTPYHIFGVLS. Residues 401–417 are Extracellular-facing; the sequence is LLTDPETPLGKTLMSWD. The chain crosses the membrane as a helical span at residues 418–438; that stretch reads HVCIALASANSCFNPFLYALL. The Cytoplasmic segment spans residues 439–482; that stretch reads GKDFRKKARQSIQGILEAAFSEELTRSTHCPSNNVISERNSTTV. Residue Ser-459 is modified to Phosphoserine. At Thr-463 the chain carries Phosphothreonine.

This sequence belongs to the G-protein coupled receptor 1 family. Interacts with VGF-derived peptide TLQP-21. In terms of processing, among the sulfation sites Tyr-174 is essential for binding of C3a anaphylatoxin. Post-translationally, O-glycosylated. In terms of tissue distribution, widely expressed in several differentiated hematopoietic cell lines, in the lung, spleen, ovary, placenta, small intestine, throughout the brain, heart, and endothelial cells. Mostly expressed in lymphoid tissues.

It localises to the cell membrane. Its function is as follows. Receptor for the chemotactic and inflammatory peptide anaphylatoxin C3a. This receptor stimulates chemotaxis, granule enzyme release and superoxide anion production. The sequence is that of C3a anaphylatoxin chemotactic receptor (C3AR1) from Homo sapiens (Human).